The primary structure comprises 245 residues: DNA repair protein RecO (245 aa).

The protein belongs to the RecO family.

Involved in DNA repair and RecF pathway recombination. This is DNA repair protein RecO from Chromobacterium violaceum (strain ATCC 12472 / DSM 30191 / JCM 1249 / CCUG 213 / NBRC 12614 / NCIMB 9131 / NCTC 9757 / MK).